The primary structure comprises 606 residues: Alpha-1,2-mannosyltransferase MNN23 (606 aa).

Residues 1-14 (MSINFLSIPRNRFK) are Cytoplasmic-facing. Residues 15–35 (AIGVLSVTCILIYVILHSSII) form a helical membrane-spanning segment. Residues 36–606 (TTDFDVSDYG…QVAWLSKSQN (571 aa)) lie on the Extracellular side of the membrane. The interval 59 to 86 (DNGENLKDPQPELDNDKGNGETDTTTSN) is disordered. A compositionally biased stretch (basic and acidic residues) spans 62-78 (ENLKDPQPELDNDKGNG).

It belongs to the MNN1/MNT family.

Its subcellular location is the golgi apparatus membrane. The protein operates within protein modification; protein glycosylation. In terms of biological role, alpha-1,2-mannosyltransferase required for cell wall integrity. Responsible for addition of the first alpha-1,2-linked mannose to form the branches on the mannan backbone of oligosaccharides. Addition of alpha-1,2-mannose is required for stabilization of the alpha-1,6-mannose backbone and hence regulates mannan fibril length; and is important for both immune recognition and virulence. This chain is Alpha-1,2-mannosyltransferase MNN23 (MNN23), found in Candida albicans (strain SC5314 / ATCC MYA-2876) (Yeast).